An 89-amino-acid polypeptide reads, in one-letter code: Pigment dispersing factor homolog pdf-2 (89 aa).

The first 27 residues, M1 to A27, serve as a signal peptide directing secretion.

Its function is as follows. Probable ligand of isoforms a and b of the calcitonin receptor-like protein, pdfr-1, a G-protein coupled receptor. May not signal through isoform c of pdfr-1. Involved in locomotion; may play a role in circadian rhythms of locomotor activity. Modulator of egg-laying. The polypeptide is Pigment dispersing factor homolog pdf-2 (Caenorhabditis elegans).